Here is a 390-residue protein sequence, read N- to C-terminus: Period circadian protein (390 aa).

Disordered regions lie at residues 27 to 120 (VTAP…APPV), 164 to 188 (LEYS…WEGE), 247 to 266 (GGNG…STNQ), and 327 to 356 (SPSG…TSQA). Residues 93-114 (GTSGTGNSGDGGGGGGADGTGS) are compositionally biased toward gly residues. Residues 247–256 (GGNGNVGSGN) are compositionally biased toward gly residues.

In terms of assembly, forms a heterodimer with timeless (TIM); the complex then translocates into the nucleus. In terms of processing, phosphorylated with a circadian rhythmicity, probably by the double-time protein (dbt). Phosphorylation could be implicated in the stability of per monomer and in the formation of heterodimer per-tim.

It localises to the nucleus. The protein resides in the cytoplasm. Its subcellular location is the perinuclear region. Functionally, essential for biological clock functions. Determines the period length of circadian and ultradian rhythms; an increase in PER dosage leads to shortened circadian rhythms and a decrease leads to lengthened circadian rhythms. Essential for the circadian rhythmicity of locomotor activity, eclosion behavior, and for the rhythmic component of the male courtship song that originates in the thoracic nervous system. The biological cycle depends on the rhythmic formation and nuclear localization of the TIM-PER complex. Light induces the degradation of TIM, which promotes elimination of PER. Nuclear activity of the heterodimer coordinatively regulates PER and TIM transcription through a negative feedback loop. Behaves as a negative element in circadian transcriptional loop. Does not appear to bind DNA, suggesting indirect transcriptional inhibition. The protein is Period circadian protein (per) of Drosophila tropicalis (Fruit fly).